The chain runs to 272 residues: Ethanolamine ammonia-lyase small subunit (272 aa).

Residues valine 161, glutamate 182, and cysteine 211 each coordinate adenosylcob(III)alamin.

Belongs to the EutC family. The basic unit is a heterodimer which dimerizes to form tetramers. The heterotetramers trimerize; 6 large subunits form a core ring with 6 small subunits projecting outwards. The cofactor is adenosylcob(III)alamin.

It localises to the bacterial microcompartment. The catalysed reaction is ethanolamine = acetaldehyde + NH4(+). It participates in amine and polyamine degradation; ethanolamine degradation. Functionally, catalyzes the deamination of various vicinal amino-alcohols to oxo compounds. Allows this organism to utilize ethanolamine as the sole source of nitrogen and carbon in the presence of external vitamin B12. The chain is Ethanolamine ammonia-lyase small subunit from Pseudomonas putida (strain W619).